The sequence spans 254 residues: Gamma-glutamyl-gamma-aminobutyrate hydrolase (254 aa).

The region spanning arginine 16–glutamate 250 is the Glutamine amidotransferase type-1 domain. The active-site Nucleophile is cysteine 114. Active-site residues include histidine 222 and glutamate 224.

This sequence belongs to the peptidase C26 family.

It catalyses the reaction 4-(gamma-L-glutamylamino)butanoate + H2O = 4-aminobutanoate + L-glutamate. The protein operates within amine and polyamine degradation; putrescine degradation; 4-aminobutanoate from putrescine: step 4/4. In terms of biological role, involved in the breakdown of putrescine via hydrolysis of the gamma-glutamyl linkage of gamma-glutamyl-gamma-aminobutyrate. The protein is Gamma-glutamyl-gamma-aminobutyrate hydrolase (puuD) of Escherichia coli O157:H7.